We begin with the raw amino-acid sequence, 147 residues long: Ubiquitin-like-conjugating enzyme ATG10 (147 aa).

C116 acts as the Glycyl thioester intermediate in catalysis.

The protein belongs to the ATG10 family. Forms homooligomers. Interacts with ATG10. Interacts with ATG7 and ATG12.

It is found in the preautophagosomal structure membrane. Its function is as follows. E2-like enzyme required for the cytoplasm to vacuole transport (Cvt), autophagy and nucleophagy. Acts as an E2-like enzyme that catalyzes the conjugation of ATG12 to ATG5. ATG12 conjugation to ATG5 is required for proper localization of ATG8 to the preautophagosomal structure (PAS). Likely serves as an ATG5-recognition molecule. In Kluyveromyces marxianus (strain DMKU3-1042 / BCC 29191 / NBRC 104275) (Yeast), this protein is Ubiquitin-like-conjugating enzyme ATG10.